A 161-amino-acid chain; its full sequence is Bacterioferritin (161 aa).

In terms of domain architecture, Ferritin-like diiron spans 1–145 (MKGDAKVIEF…TQISLYDRLG (145 aa)). Positions 18 and 51 each coordinate Fe cation. Position 52 (M52) interacts with heme b. Residues H54, E94, E127, and H130 each coordinate Fe cation.

The protein belongs to the bacterioferritin family. As to quaternary structure, homooligomer of 24 subunits, arranged as 12 dimers, that are packed together to form an approximately spherical molecule with a central cavity, in which large amounts of iron can be deposited. Heme b is required as a cofactor.

It carries out the reaction 4 Fe(2+) + O2 + 4 H(+) = 4 Fe(3+) + 2 H2O. It catalyses the reaction Fe(2+)(in) = Fe(2+)(out). Functionally, iron-storage protein, whose ferroxidase center binds Fe(2+), oxidizes it using dioxygen to Fe(3+), and participates in the subsequent Fe(3+) oxide mineral core formation within the central cavity of the BFR protein shell. The polypeptide is Bacterioferritin (bfr) (Rhodobacter capsulatus (Rhodopseudomonas capsulata)).